The primary structure comprises 1368 residues: DNA-directed RNA polymerase subunit beta (1368 aa).

This sequence belongs to the RNA polymerase beta chain family. The RNAP catalytic core consists of 2 alpha, 1 beta, 1 beta' and 1 omega subunit. When a sigma factor is associated with the core the holoenzyme is formed, which can initiate transcription.

The catalysed reaction is RNA(n) + a ribonucleoside 5'-triphosphate = RNA(n+1) + diphosphate. DNA-dependent RNA polymerase catalyzes the transcription of DNA into RNA using the four ribonucleoside triphosphates as substrates. This is DNA-directed RNA polymerase subunit beta from Legionella pneumophila (strain Lens).